Here is a 310-residue protein sequence, read N- to C-terminus: Ribonuclease Z (310 aa).

Histidine 61, histidine 63, aspartate 65, histidine 66, and histidine 139 together coordinate Zn(2+). Residue aspartate 65 is the Proton acceptor of the active site. Residues glutamate 150 to arginine 175 form a disordered region. Residues arginine 153–glutamate 164 are compositionally biased toward basic and acidic residues. The Zn(2+) site is built by aspartate 210 and histidine 268.

Belongs to the RNase Z family. Homodimer. The cofactor is Zn(2+).

The catalysed reaction is Endonucleolytic cleavage of RNA, removing extra 3' nucleotides from tRNA precursor, generating 3' termini of tRNAs. A 3'-hydroxy group is left at the tRNA terminus and a 5'-phosphoryl group is left at the trailer molecule.. In terms of biological role, zinc phosphodiesterase, which displays some tRNA 3'-processing endonuclease activity. Probably involved in tRNA maturation, by removing a 3'-trailer from precursor tRNA. The protein is Ribonuclease Z of Halorubrum lacusprofundi (strain ATCC 49239 / DSM 5036 / JCM 8891 / ACAM 34).